Here is a 273-residue protein sequence, read N- to C-terminus: Putative pyruvate, phosphate dikinase regulatory protein (273 aa).

149–156 (GPSRTSKT) provides a ligand contact to ADP.

Belongs to the pyruvate, phosphate/water dikinase regulatory protein family. PDRP subfamily.

The catalysed reaction is N(tele)-phospho-L-histidyl/L-threonyl-[pyruvate, phosphate dikinase] + ADP = N(tele)-phospho-L-histidyl/O-phospho-L-threonyl-[pyruvate, phosphate dikinase] + AMP + H(+). It carries out the reaction N(tele)-phospho-L-histidyl/O-phospho-L-threonyl-[pyruvate, phosphate dikinase] + phosphate + H(+) = N(tele)-phospho-L-histidyl/L-threonyl-[pyruvate, phosphate dikinase] + diphosphate. In terms of biological role, bifunctional serine/threonine kinase and phosphorylase involved in the regulation of the pyruvate, phosphate dikinase (PPDK) by catalyzing its phosphorylation/dephosphorylation. The chain is Putative pyruvate, phosphate dikinase regulatory protein from Rickettsia africae (strain ESF-5).